The chain runs to 452 residues: Cobyrinate a,c-diamide synthase (452 aa).

In terms of domain architecture, GATase cobBQ-type spans arginine 244–tryptophan 429. Cysteine 325 serves as the catalytic Nucleophile.

It belongs to the CobB/CbiA family. It depends on Mg(2+) as a cofactor.

It catalyses the reaction cob(II)yrinate + 2 L-glutamine + 2 ATP + 2 H2O = cob(II)yrinate a,c diamide + 2 L-glutamate + 2 ADP + 2 phosphate + 2 H(+). It functions in the pathway cofactor biosynthesis; adenosylcobalamin biosynthesis; cob(II)yrinate a,c-diamide from sirohydrochlorin (anaerobic route): step 10/10. Catalyzes the ATP-dependent amidation of the two carboxylate groups at positions a and c of cobyrinate, using either L-glutamine or ammonia as the nitrogen source. The chain is Cobyrinate a,c-diamide synthase from Gloeobacter violaceus (strain ATCC 29082 / PCC 7421).